The sequence spans 180 residues: dCTP deaminase, dUMP-forming (180 aa).

DCTP-binding positions include 96-101, Asp113, 121-123, Gln142, Tyr156, and Gln163; these read RSSLGR and TLE. Residue Glu123 is the Proton donor/acceptor of the active site.

Belongs to the dCTP deaminase family. As to quaternary structure, homotrimer.

It catalyses the reaction dCTP + 2 H2O = dUMP + NH4(+) + diphosphate. It functions in the pathway pyrimidine metabolism; dUMP biosynthesis; dUMP from dCTP: step 1/1. Bifunctional enzyme that catalyzes both the deamination of dCTP to dUTP and the hydrolysis of dUTP to dUMP without releasing the toxic dUTP intermediate. This chain is dCTP deaminase, dUMP-forming, found in Aquifex aeolicus (strain VF5).